A 171-amino-acid polypeptide reads, in one-letter code: MNHFELFDLPVALDIDLVALKANFLKLQQLHHPDKALDKDQALIMSSDINQAYKILSQVDSRAAYLLSLKKQDHHLDQSIHDFEFLQSALEIREQLDEADSQEQLITLKNEVKQWVDGLIREFKIDYSDEDWSEARDTVRKLRFFQRVLNDIDKAEDQLLDEDSFDLDDDF.

The J domain maps to 2–69 (NHFELFDLPV…DSRAAYLLSL (68 aa)).

It belongs to the HscB family. In terms of assembly, interacts with HscA and stimulates its ATPase activity.

Its function is as follows. Co-chaperone involved in the maturation of iron-sulfur cluster-containing proteins. Seems to help targeting proteins to be folded toward HscA. The protein is Co-chaperone protein HscB homolog of Acinetobacter baylyi (strain ATCC 33305 / BD413 / ADP1).